We begin with the raw amino-acid sequence, 311 residues long: Homeobox-leucine zipper protein HOX13 (311 aa).

The segment at Met-1 to Arg-74 is disordered. A compositionally biased stretch (acidic residues) spans Asp-35–Met-54. The homeobox DNA-binding region spans Leu-69–Gln-128. The tract at residues Lys-127–Lys-171 is leucine-zipper.

The protein belongs to the HD-ZIP homeobox family. Class I subfamily. Expressed in seedlings, roots, stems, leaf sheaths and blades and panicles.

It is found in the nucleus. Probable transcription factor. The sequence is that of Homeobox-leucine zipper protein HOX13 (HOX13) from Oryza sativa subsp. japonica (Rice).